We begin with the raw amino-acid sequence, 291 residues long: 4-diphosphocytidyl-2-C-methyl-D-erythritol kinase (291 aa).

Lys10 is an active-site residue. ATP is bound at residue 100-110; it reads PIGGGLGGGSS. Asp142 is an active-site residue.

The protein belongs to the GHMP kinase family. IspE subfamily. As to quaternary structure, homodimer.

It carries out the reaction 4-CDP-2-C-methyl-D-erythritol + ATP = 4-CDP-2-C-methyl-D-erythritol 2-phosphate + ADP + H(+). The protein operates within isoprenoid biosynthesis; isopentenyl diphosphate biosynthesis via DXP pathway; isopentenyl diphosphate from 1-deoxy-D-xylulose 5-phosphate: step 3/6. In terms of biological role, catalyzes the phosphorylation of the position 2 hydroxy group of 4-diphosphocytidyl-2C-methyl-D-erythritol. The polypeptide is 4-diphosphocytidyl-2-C-methyl-D-erythritol kinase (Hamiltonella defensa subsp. Acyrthosiphon pisum (strain 5AT)).